Consider the following 186-residue polypeptide: ATP-dependent protease subunit HslV (186 aa).

Residue threonine 14 is part of the active site. Residues alanine 168, cysteine 171, and threonine 174 each coordinate Na(+).

The protein belongs to the peptidase T1B family. HslV subfamily. A double ring-shaped homohexamer of HslV is capped on each side by a ring-shaped HslU homohexamer. The assembly of the HslU/HslV complex is dependent on binding of ATP.

The protein localises to the cytoplasm. The enzyme catalyses ATP-dependent cleavage of peptide bonds with broad specificity.. With respect to regulation, allosterically activated by HslU binding. In terms of biological role, protease subunit of a proteasome-like degradation complex believed to be a general protein degrading machinery. This is ATP-dependent protease subunit HslV from Bradyrhizobium sp. (strain BTAi1 / ATCC BAA-1182).